The chain runs to 88 residues: Small ribosomal subunit protein uS15c (88 aa).

The protein belongs to the universal ribosomal protein uS15 family. As to quaternary structure, part of the 30S ribosomal subunit.

Its subcellular location is the plastid. It localises to the chloroplast. The sequence is that of Small ribosomal subunit protein uS15c (rps15) from Pinus thunbergii (Japanese black pine).